A 1311-amino-acid chain; its full sequence is Zinc finger protein 423 (1311 aa).

Residues 1 to 11 show a composition bias toward basic residues; sequence MSRRKQAKPRS. 3 disordered regions span residues 1-21, 34-70, and 95-123; these read MSRR…EASD, GGLE…EDVE, and AHRC…VASP. Residues 41 to 54 are compositionally biased toward basic and acidic residues; sequence ECDRKSSRALEDRN. Serine 55 and serine 58 each carry phosphoserine. Residues 75–101 form a C2H2-type 1; degenerate zinc finger; the sequence is YTCDHCQQDFESLADLTDHRAHRCPGD. Residues 110–123 show a composition bias toward polar residues; sequence WVASSPSSKDVASP. C2H2-type zinc fingers lie at residues 146–168, 174–196, 202–224, 230–252, 271–294, 303–326, and 331–353; these read YPCQ…EQIH, FKCT…IKLH, YHCH…LKTH, FKCS…MQAH, FMCD…LTLH, LQCI…HQAH, and HKCP…LDSH. The segment at 354 to 426 is disordered; the sequence is RQPDSSNHSV…PLRGQKKMRD (73 aa). Residues 373-382 show a composition bias toward polar residues; that stretch reads ASMSSATPDS. A compositionally biased stretch (low complexity) spans 390–404; that stretch reads SVASMSSATPDSSAS. Residues 436-460 form a C2H2-type 9; degenerate zinc finger; sequence YSCPYCSKRDFTSLAVLEIHLKTIH. C2H2-type zinc fingers lie at residues 468 to 491, 507 to 530, and 544 to 567; these read HTCQ…RKLH, FHCN…RVSH, and FFCN…QQAH. The C2H2-type 13; atypical zinc-finger motif lies at 590-615; the sequence is YSCPYCTNSPIFGSILKLTKHIKENH. Residues 617–654 form a disordered region; sequence NIPLAHSKKSKAEQSPVSSDVEVSSPKRQRLSGSANSI. Serine 631 is modified (phosphoserine). The segment covering 631 to 642 has biased composition (low complexity); the sequence is SPVSSDVEVSSP. C2H2-type zinc fingers lie at residues 659 to 681, 689 to 711, 719 to 742, 747 to 770, 777 to 800, 808 to 830, and 834 to 857; these read YPCN…LKLH, QACP…LTVH, YVCE…LDMH, YHCT…AVKH, YRCT…KHSH, HKCI…ITTH, and YNCR…REKH. A C2H2-type 21; degenerate zinc finger spans residues 913-935; it reads YGCDICGAAYTMEVLLQNHRLRD. C2H2-type zinc fingers lie at residues 957-979, 986-1008, and 1047-1069; these read HKCN…LQTH, YMCP…KVTH, and FRCV…GTFH. Serine 1081 bears the Phosphoserine mark. The C2H2-type 25; degenerate zinc-finger motif lies at 1091 to 1109; that stretch reads YKCALCLKEFRSKQDLVRL. C2H2-type zinc fingers lie at residues 1147-1170, 1195-1217, 1225-1247, 1256-1279, and 1286-1309; these read LRCP…QVDH, YQCI…VANH, HECK…LIEH, FKCP…FAVH, and YDCS…MSQH. Residues 1163-1174 are compositionally biased toward basic and acidic residues; sequence ESHMQVDHRDLT. The segment at 1163 to 1190 is disordered; that stretch reads ESHMQVDHRDLTPETSGPRKGAQTSPVP.

Belongs to the krueppel C2H2-type zinc-finger protein family. In terms of assembly, homodimer. Interacts with PARP1, SMAD1 and SMAD4. Interacts with EBF1. Interacts with CEP290. Expressed in brain, eye, olfactory epithelium, spleen and heart. Expressed in the basal layer, consisting of neural precursor cells and immature sensory neurons of the olfactory epithelium, but not in the mature receptor cells.

Its subcellular location is the nucleus. Its function is as follows. Transcription factor that can both act as an activator or a repressor depending on the context. Plays a central role in BMP signaling and olfactory neurogenesis. Associates with SMADs in response to BMP2 leading to activate transcription of BMP target genes. Acts as a transcriptional repressor via its interaction with EBF1, a transcription factor involved in terminal olfactory receptor neurons differentiation; this interaction preventing EBF1 to bind DNA and activate olfactory-specific genes. Involved in olfactory neurogenesis by participating in a developmental switch that regulates the transition from differentiation to maturation in olfactory receptor neurons. Controls proliferation and differentiation of neural precursors in cerebellar vermis formation. The sequence is that of Zinc finger protein 423 (Znf423) from Rattus norvegicus (Rat).